The sequence spans 245 residues: 8-amino-3,8-dideoxy-manno-octulosonate cytidylyltransferase (245 aa).

This sequence belongs to the KdsB family.

It localises to the cytoplasm. The catalysed reaction is 8-amino-3,8-dideoxy-alpha-D-manno-octulosonate + CTP = CMP-8-amino-3,8-dideoxy-alpha-D-manno-oct-2-ulosonate + diphosphate. It functions in the pathway bacterial outer membrane biogenesis; lipopolysaccharide biosynthesis. Functionally, activates KDO8N (a required 8-carbon sugar) for incorporation into bacterial lipopolysaccharide in the Shewanella genus. The polypeptide is 8-amino-3,8-dideoxy-manno-octulosonate cytidylyltransferase (Shewanella pealeana (strain ATCC 700345 / ANG-SQ1)).